Consider the following 303-residue polypeptide: T-box protein 38 (303 aa).

A DNA-binding region (T-box) is located at residues leucine 14–serine 195. The disordered stretch occupies residues phenylalanine 193–serine 225. Residues aspartate 204 to proline 213 are compositionally biased toward low complexity.

The protein resides in the nucleus. In terms of biological role, transcription factor. Required for mesodermal induction, acting redundantly with transcription factor tbx-37. Together with tbx-37, acts by inducing cell fates in the AB lineage, thereby playing a role in development of the anterior pharynx. The protein is T-box protein 38 (tbx-38) of Caenorhabditis elegans.